A 195-amino-acid polypeptide reads, in one-letter code: dITP/XTP pyrophosphatase (195 aa).

Ser-7–Lys-12 serves as a coordination point for substrate. Mg(2+) is bound by residues Glu-38 and Asp-68. The Proton acceptor role is filled by Asp-68. Residues Ser-69, Phe-150 to Asp-153, Lys-173, and His-178 to Arg-179 contribute to the substrate site.

It belongs to the HAM1 NTPase family. As to quaternary structure, homodimer. Requires Mg(2+) as cofactor.

It carries out the reaction XTP + H2O = XMP + diphosphate + H(+). The catalysed reaction is dITP + H2O = dIMP + diphosphate + H(+). The enzyme catalyses ITP + H2O = IMP + diphosphate + H(+). In terms of biological role, pyrophosphatase that catalyzes the hydrolysis of nucleoside triphosphates to their monophosphate derivatives, with a high preference for the non-canonical purine nucleotides XTP (xanthosine triphosphate), dITP (deoxyinosine triphosphate) and ITP. Seems to function as a house-cleaning enzyme that removes non-canonical purine nucleotides from the nucleotide pool, thus preventing their incorporation into DNA/RNA and avoiding chromosomal lesions. This chain is dITP/XTP pyrophosphatase, found in Nautilia profundicola (strain ATCC BAA-1463 / DSM 18972 / AmH).